The primary structure comprises 386 residues: Alkanesulfonate monooxygenase (386 aa).

The protein belongs to the SsuD family.

The enzyme catalyses an alkanesulfonate + FMNH2 + O2 = an aldehyde + FMN + sulfite + H2O + 2 H(+). Catalyzes the desulfonation of aliphatic sulfonates. The chain is Alkanesulfonate monooxygenase from Paraburkholderia phytofirmans (strain DSM 17436 / LMG 22146 / PsJN) (Burkholderia phytofirmans).